The chain runs to 393 residues: Demethylspheroidene O-methyltransferase (393 aa).

The disordered stretch occupies residues 1 to 36 (MPKDDHTGATADRTAQPTGTGKQPLVPGQPGAAPVQ). The segment covering 26–36 (VPGQPGAAPVQ) has biased composition (low complexity). Residues D259 and R297 each contribute to the S-adenosyl-L-methionine site.

It belongs to the class I-like SAM-binding methyltransferase superfamily. Cation-independent O-methyltransferase family.

It catalyses the reaction demethylspheroidene + S-adenosyl-L-methionine = spheroidene + S-adenosyl-L-homocysteine + H(+). Its pathway is carotenoid biosynthesis; spheroidene biosynthesis. Methyltransferase that mediates the O-methylation of 1-hydroxy carotenoids. Converts hydroxyneurosporene to methoxyneurosporene or demethylspheroidene to spheroidene. Also able to produce spirilloxanthin. The sequence is that of Demethylspheroidene O-methyltransferase (crtF) from Rhodobacter capsulatus (strain ATCC BAA-309 / NBRC 16581 / SB1003).